The following is a 241-amino-acid chain: uncharacterized protein (241 aa).

This is an uncharacterized protein from Methanocaldococcus jannaschii (strain ATCC 43067 / DSM 2661 / JAL-1 / JCM 10045 / NBRC 100440) (Methanococcus jannaschii).